Here is a 400-residue protein sequence, read N- to C-terminus: Polyadenylate-binding protein-interacting protein 1 (400 aa).

Positions 1-10 (MSDSFDRAPE) are enriched in basic and acidic residues. Residues 1–36 (MSDSFDRAPEQTKPQRAPPSSQDKIPQQNSESAMAK) form a disordered region. Positions 12–32 (TKPQRAPPSSQDKIPQQNSES) are enriched in polar residues. A PABPC1-interacting motif-2 (PAM2) region spans residues 37–64 (PQVVVAPVLMSKLSANAPEFYPSGYSSN). Residues 78–296 (TLSEYVQDFL…LLKLVELRSS (219 aa)) are PAIP1 middle domain (PAIP1M). One can recognise an MIF4G domain in the interval 80 to 297 (SEYVQDFLNH…LKLVELRSSN (218 aa)). Residues 356–376 (DYEENGTDLSGAGDPYLDDID) form a disordered region. Residues 361 to 400 (GTDLSGAGDPYLDDIDDEMDPEIEEAYEKFCLESERKRKQ) are PABPC1-interacting motif-1 (PAM1).

Interacts with the RRM1-RRM2 and C-terminus regions of PABPC1 in a 1:1 stoichiometry. Interacts with EIF4A.

The protein localises to the cytoplasm. In terms of biological role, acts as a coactivator in the regulation of translation initiation of poly(A)-containing mRNAs. Its stimulatory activity on translation is mediated via its action on PABPC1. Competes with PAIP2 for binding to PABPC1. Its association with EIF4A and PABPC1 may potentiate contacts between mRNA termini. May also be involved in translationally coupled mRNA turnover. Implicated with other RNA-binding proteins in the cytoplasmic deadenylation/translational and decay interplay of the FOS mRNA mediated by the major coding-region determinant of instability (mCRD) domain. The polypeptide is Polyadenylate-binding protein-interacting protein 1 (Paip1) (Mus musculus (Mouse)).